Consider the following 609-residue polypeptide: Alpha-fetoprotein (609 aa).

Positions 1–18 (MKWVESIFLIFLLNFTES) are cleaved as a signal peptide. 3 Albumin domains span residues 19–210 (RTLH…ATVT), 211–402 (KELR…EELQ), and 403–601 (KYIQ…KLIS). Residue His-22 participates in Cu(2+) binding. N-linked (GlcNAc...) asparagine glycosylation is present at Asn-42. 8 cysteine pairs are disulfide-bonded: Cys-99-Cys-114, Cys-113-Cys-124, Cys-148-Cys-193, Cys-192-Cys-201, Cys-224-Cys-270, Cys-269-Cys-277, Cys-289-Cys-303, and Cys-302-Cys-313. Phosphoserine occurs at positions 111, 115, and 117. A glycan (N-linked (GlcNAc...) asparagine) is linked at Asn-251. Ser-344 is subject to Phosphoserine. Intrachain disulfides connect Cys-384–Cys-393, Cys-416–Cys-462, Cys-461–Cys-472, Cys-485–Cys-501, Cys-500–Cys-511, Cys-538–Cys-583, and Cys-582–Cys-591. Ser-444 carries the phosphoserine modification.

The protein belongs to the ALB/AFP/VDB family. As to quaternary structure, dimeric and trimeric forms have been found in addition to the monomeric form. In terms of tissue distribution, plasma. Synthesized by the fetal liver and yolk sac.

It localises to the secreted. Its function is as follows. Binds copper, nickel, and fatty acids as well as, and bilirubin less well than, serum albumin. This is Alpha-fetoprotein (AFP) from Pan troglodytes (Chimpanzee).